The following is a 275-amino-acid chain: N-(5'-phosphoribosyl)anthranilate isomerase 2, chloroplastic (275 aa).

A chloroplast-targeting transit peptide spans 1-32 (MSTGISTDLHVHFGALNFSKTYKSGLSNRTVS).

It belongs to the TrpF family. As to expression, expressed in roots and shoots.

Its subcellular location is the plastid. It is found in the chloroplast. The enzyme catalyses N-(5-phospho-beta-D-ribosyl)anthranilate = 1-(2-carboxyphenylamino)-1-deoxy-D-ribulose 5-phosphate. The protein operates within amino-acid biosynthesis; L-tryptophan biosynthesis; L-tryptophan from chorismate: step 3/5. The chain is N-(5'-phosphoribosyl)anthranilate isomerase 2, chloroplastic (PAI2) from Arabidopsis thaliana (Mouse-ear cress).